A 539-amino-acid chain; its full sequence is Tripartite motif-containing protein 26 (539 aa).

Residues 16-57 (CSICLDYLRDPVTIDCGHVFCRSCTTDVRPISGSRPVCPLCK) form an RING-type zinc finger. The B box-type zinc finger occupies 97 to 138 (QDAKLCERHREKLHYYCEDDGKLLCVMCRESREHRPHTAVLM). Zn(2+)-binding residues include Cys102, His105, Cys124, and His130. The stretch at 188 to 227 (IVAEFEQGHQFLREREEHLLEQLAKLEQELTEGREKFKSR) forms a coiled coil. The B30.2/SPRY domain maps to 295–539 (RGLREFQGKL…WPGTRLLLRP (245 aa)). Residues 376-437 (REGWSEDEEE…EEEEEVLESC (62 aa)) are disordered. Over residues 380–434 (SEDEEEGDEEEEGEEEEEEEEAGYGDGYDDWETDEDEESLGDEEEEEEEEEEEVL) the composition is skewed to acidic residues.

Belongs to the TRIM/RBCC family. In terms of assembly, interacts with TBK1; this interaction bridges together TBK1 and NEMO in order to activate TBK1. Interacts with INCA1. Post-translationally, autoubiquitinates upon viral infection. In turn, autoubiquitinated TRIM26 recruits NEMO and bridges TBK1-NEMO interaction.

The protein resides in the cytoplasm. It is found in the nucleus. It carries out the reaction S-ubiquitinyl-[E2 ubiquitin-conjugating enzyme]-L-cysteine + [acceptor protein]-L-lysine = [E2 ubiquitin-conjugating enzyme]-L-cysteine + N(6)-ubiquitinyl-[acceptor protein]-L-lysine.. Its function is as follows. E3 ubiquitin-protein ligase which regulates the IFN-beta production and antiviral response downstream of various DNA-encoded pattern-recognition receptors (PRRs). Also plays a central role in determining the response to different forms of oxidative stress by controlling levels of DNA glycosylases NEIL1, NEIL3 and NTH1 that are involved in repair of damaged DNA. Promotes nuclear IRF3 ubiquitination and proteasomal degradation. Bridges together TBK1 and NEMO during the innate response to viral infection leading to the activation of TBK1. Positively regulates LPS-mediated inflammatory innate immune response by catalyzing the 'Lys-11'-linked polyubiquitination of TAB1 to enhance its activation and subsequent NF-kappa-B and MAPK signaling. In a manner independent of its catalytic activity, inhibits WWP2, a SOX2-directed E3 ubiquitin ligase, and thus protects SOX2 from polyubiquitination and proteasomal degradation. Ubiquitinates the histone acetyltransferase protein complex component PHF20 and thereby triggers its degradation in the nucleus after its recruitment by the histone demethylase KDM6B, serving as a scaffold protein. Upon induction by TGF-beta, ubiquitinates the TFIID component TAF7 for proteasomal degradation. Induces ferroptosis by ubiquitinating SLC7A11, a critical protein for lipid reactive oxygen species (ROS) scavenging. Inhibits directly hepatitis B virus replication by mediating HBX ubiquitination and subsequent degradation. Functionally, (Microbial infection) Promotes herpes simplex virus type 2/HHV-2 infection in vaginal epithelial cells by decreasing the nuclear localization of IRF3, the primary mediator of type I interferon activation. The sequence is that of Tripartite motif-containing protein 26 (TRIM26) from Homo sapiens (Human).